The sequence spans 427 residues: Endothelin-1 receptor (427 aa).

An N-terminal signal peptide occupies residues 1–20 (METFWLRVSFWVALVGGVIS). Topologically, residues 21–80 (DNPESYSTNLSIHVDSVTTFRGTELSFVVTTHQPTNLALPSNGSMHNYCPQQTKITSAFK) are extracellular. N-linked (GlcNAc...) asparagine glycosylation is found at Asn29 and Asn62. Residues 81–102 (YINTVISCTIFIVGMVGNATLL) form a helical membrane-spanning segment. Residues 103 to 112 (RIIYQNKCMR) lie on the Cytoplasmic side of the membrane. The helical transmembrane segment at 113-132 (NGPNALIASLALGDLIYVVI) threads the bilayer. The Extracellular portion of the chain corresponds to 133–159 (DLPINVFKLLAGRWPFEQNDFGVFLCK). A disulfide bridge links Cys158 with Cys239. The helical transmembrane segment at 160-181 (LFPFLQKSSVGITVLNLCALSV) threads the bilayer. At 182 to 205 (DRYRAVASWSRVQGIGIPLVTAIE) the chain is on the cytoplasmic side. The helical transmembrane segment at 206–229 (IVSIWILSFILAIPEAIGFVMVPF) threads the bilayer. Topologically, residues 230–256 (EYKGAQHRTCMLNATSKFMEFYQDVKD) are extracellular. Residues 257 to 278 (WWLFGFYFCMPLVCTAIFYTLM) traverse the membrane as a helical segment. The Cytoplasmic segment spans residues 279-306 (TCEMLNRRNGSLRIALSEHLKQRREVAK). Residues 307-328 (TVFCLVVIFALCWFPLHLSRIL) traverse the membrane as a helical segment. Topologically, residues 329–347 (KKTVYDEMDTNRCELLSFL) are extracellular. The helical transmembrane segment at 348-372 (LLMDYIGINLATMNSCINPIALYFV) threads the bilayer. Residues 373 to 427 (SKKFKNCFQSCLCCCCYQSKSLMTSVPMNGTSIQWKNPEQNNHNTERSSHKDSIN) are Cytoplasmic-facing. Over residues 405-415 (IQWKNPEQNNH) the composition is skewed to polar residues. Residues 405–427 (IQWKNPEQNNHNTERSSHKDSIN) form a disordered region. Residues 416–427 (NTERSSHKDSIN) are compositionally biased toward basic and acidic residues. Ser425 carries the post-translational modification Phosphoserine.

The protein belongs to the G-protein coupled receptor 1 family. Endothelin receptor subfamily. EDNRA sub-subfamily. As to quaternary structure, interacts with HDAC7 and KAT5.

The protein resides in the cell membrane. Functionally, receptor for endothelin-1. Mediates its action by association with G proteins that activate a phosphatidylinositol-calcium second messenger system. The rank order of binding affinities for ET-A is: ET1 &gt; ET2 &gt;&gt; ET3. The protein is Endothelin-1 receptor of Ovis aries (Sheep).